Here is a 269-residue protein sequence, read N- to C-terminus: Indole-3-glycerol phosphate synthase (269 aa).

It belongs to the TrpC family.

It carries out the reaction 1-(2-carboxyphenylamino)-1-deoxy-D-ribulose 5-phosphate + H(+) = (1S,2R)-1-C-(indol-3-yl)glycerol 3-phosphate + CO2 + H2O. Its pathway is amino-acid biosynthesis; L-tryptophan biosynthesis; L-tryptophan from chorismate: step 4/5. This is Indole-3-glycerol phosphate synthase from Rhodococcus opacus (strain B4).